The chain runs to 352 residues: Mitochondrial ubiquitin ligase activator of NFKB 1 (352 aa).

The Cytoplasmic segment spans residues 1 to 8 (MESGGRPS). A helical membrane pass occupies residues 9–29 (LCQFILLGTTSVVTAALYSVY). Residues 30–238 (RQKARVSQEL…LLQRQESSVR (209 aa)) are Mitochondrial intermembrane-facing. A Glycyl lysine isopeptide (Lys-Gly) (interchain with G-Cter in ubiquitin) cross-link involves residue Lys-52. The helical transmembrane segment at 239 to 259 (LWKVLALVFGFATCATLFFIL) threads the bilayer. At 260–352 (RKQYLQRQER…ITRVIPLYNS (93 aa)) the chain is on the cytoplasmic side. Residues Lys-273 and Lys-299 each participate in a glycyl lysine isopeptide (Lys-Gly) (interchain with G-Cter in ubiquitin) cross-link. Residues 302 to 340 (CVVCLSSFKSCVFLECGHVCSCTECYRALPEPKKCPICR) form an RING-type zinc finger.

In terms of assembly, homooligomer. Interacts with MAP3K7/TAK1. Interacts with UBC9. Interacts with and sumoylates DNM1L. Interacts with MAVS. Interacts with TP53 (via N-terminus); the interaction leads to ubiquitination and proteasomal degradation of TP53. In terms of processing, ubiquitinated by PRKN during mitophagy, leading to its degradation and enhancement of mitophagy. Deubiquitinated by USP30. As to expression, widely expressed with highest levels in the heart, skeletal muscle, placenta, kidney and liver. Barely detectable in colon and thymus.

Its subcellular location is the mitochondrion outer membrane. It localises to the peroxisome. It carries out the reaction S-ubiquitinyl-[E2 ubiquitin-conjugating enzyme]-L-cysteine + [acceptor protein]-L-lysine = [E2 ubiquitin-conjugating enzyme]-L-cysteine + N(6)-ubiquitinyl-[acceptor protein]-L-lysine.. The protein operates within protein modification; protein ubiquitination. Its pathway is protein modification; protein sumoylation. Its function is as follows. Exhibits weak E3 ubiquitin-protein ligase activity. E3 ubiquitin ligases accept ubiquitin from an E2 ubiquitin-conjugating enzyme in the form of a thioester and then directly transfer the ubiquitin to targeted substrates. Can ubiquitinate AKT1 preferentially at 'Lys-284' involving 'Lys-48'-linked polyubiquitination and seems to be involved in regulation of Akt signaling by targeting phosphorylated Akt to proteasomal degradation. Mediates polyubiquitination of cytoplasmic TP53 at 'Lys-24' which targets TP53 for proteasomal degradation, thus reducing TP53 levels in the cytoplasm and mitochondrion. Proposed to preferentially act as a SUMO E3 ligase at physiological concentrations. Plays a role in the control of mitochondrial morphology by promoting mitochondrial fragmentation, and influences mitochondrial localization. Likely to promote mitochondrial fission through negatively regulating the mitochondrial fusion proteins MFN1 and MFN2, acting in a pathway that is parallel to the PRKN/PINK1 regulatory pathway. May also be involved in the sumoylation of the membrane fission protein DNM1L. Inhibits cell growth. When overexpressed, activates JNK through MAP3K7/TAK1 and induces caspase-dependent apoptosis. Involved in the modulation of innate immune defense against viruses by inhibiting RIGI-dependent antiviral response. Can mediate RIGI sumoylation and disrupt its polyubiquitination. The sequence is that of Mitochondrial ubiquitin ligase activator of NFKB 1 (MUL1) from Homo sapiens (Human).